Consider the following 671-residue polypeptide: DNA ligase (671 aa).

Residues 32–36, 81–82, and Glu113 each bind NAD(+); these read DAEYD and SL. Lys115 (N6-AMP-lysine intermediate) is an active-site residue. Residues Arg136, Glu173, Lys290, and Lys314 each coordinate NAD(+). Residues Cys408, Cys411, Cys426, and Cys432 each coordinate Zn(2+). One can recognise a BRCT domain in the interval 593–671; that stretch reads EIDSPFAGKT…EAEMIRLLGA (79 aa).

The protein belongs to the NAD-dependent DNA ligase family. LigA subfamily. The cofactor is Mg(2+). Mn(2+) serves as cofactor.

The catalysed reaction is NAD(+) + (deoxyribonucleotide)n-3'-hydroxyl + 5'-phospho-(deoxyribonucleotide)m = (deoxyribonucleotide)n+m + AMP + beta-nicotinamide D-nucleotide.. Its function is as follows. DNA ligase that catalyzes the formation of phosphodiester linkages between 5'-phosphoryl and 3'-hydroxyl groups in double-stranded DNA using NAD as a coenzyme and as the energy source for the reaction. It is essential for DNA replication and repair of damaged DNA. This is DNA ligase from Salmonella choleraesuis (strain SC-B67).